Here is a 584-residue protein sequence, read N- to C-terminus: uncharacterized protein (584 aa).

A helical transmembrane segment spans residues 15–35; the sequence is FIFFVLVFFICIIFGCIYESL. Polar residues-rich tracts occupy residues 184-194 and 204-225; these read DVSTENSYTHN and GKRTYNNQSNNNLPYDNSSYNI. Residues 184 to 226 form a disordered region; the sequence is DVSTENSYTHNNSRDDEPQNGKRTYNNQSNNNLPYDNSSYNIS. 2 coiled-coil regions span residues 267–319 and 436–477; these read DNYP…DNYP and RDNH…HYKR.

The protein localises to the membrane. This is an uncharacterized protein from Plasmodium falciparum (isolate 3D7).